Consider the following 317-residue polypeptide: Pseudouridine-5'-phosphate glycosidase (317 aa).

The Proton donor role is filled by glutamate 27. Residues lysine 89 and valine 109 each coordinate substrate. Aspartate 141 is a binding site for Mn(2+). Position 143–145 (serine 143–aspartate 145) interacts with substrate. Catalysis depends on lysine 162, which acts as the Nucleophile.

It belongs to the pseudouridine-5'-phosphate glycosidase family. As to quaternary structure, homotrimer. The cofactor is Mn(2+).

It carries out the reaction D-ribose 5-phosphate + uracil = psi-UMP + H2O. In terms of biological role, catalyzes the reversible cleavage of pseudouridine 5'-phosphate (PsiMP) to ribose 5-phosphate and uracil. Functions biologically in the cleavage direction, as part of a pseudouridine degradation pathway. The sequence is that of Pseudouridine-5'-phosphate glycosidase from Sorangium cellulosum (strain So ce56) (Polyangium cellulosum (strain So ce56)).